The primary structure comprises 711 residues: Long-chain-fatty-acid--CoA ligase 4 (711 aa).

The chain crosses the membrane as a helical; Signal-anchor for type III membrane protein span at residues 8–28 (LTIILLPVHLLITIYSALIFI). Residues 29–711 (PWYFLTNAKK…KDIERMYGGK (683 aa)) are Cytoplasmic-facing. S447 is modified (phosphoserine).

The protein belongs to the ATP-dependent AMP-binding enzyme family. It depends on Mg(2+) as a cofactor. In terms of tissue distribution, abundant in steroidogenic tissues, also found in the kidney, brain and liver.

The protein resides in the mitochondrion outer membrane. It is found in the peroxisome membrane. The protein localises to the microsome membrane. It localises to the endoplasmic reticulum membrane. Its subcellular location is the cell membrane. The catalysed reaction is a long-chain fatty acid + ATP + CoA = a long-chain fatty acyl-CoA + AMP + diphosphate. The enzyme catalyses (5Z,8Z,11Z,14Z)-eicosatetraenoate + ATP + CoA = (5Z,8Z,11Z,14Z)-eicosatetraenoyl-CoA + AMP + diphosphate. It catalyses the reaction 15-hydroxy-(5Z,8Z,11Z,13E)-eicosatetraenoate + ATP + CoA = 15-hydroxy-(5Z,8Z,11Z,13E)-eicosatetraenoyl-CoA + AMP + diphosphate. It carries out the reaction 12-hydroxy-(5Z,8Z,10E,14Z)-eicosatetraenoate + ATP + CoA = 12-hydroxy-(5Z,8Z,10E,14Z)-eicosatetraenoyl-CoA + AMP + diphosphate. The catalysed reaction is 5-hydroxy-(6E,8Z,11Z,14Z)-eicosatetraenoate + ATP + CoA = 5-hydroxy-(6E,8Z,11Z,14Z)-eicosatetraenoyl-CoA + AMP + diphosphate. The enzyme catalyses 5,6-epoxy-(8Z,11Z,14Z)-eicosatrienoate + ATP + CoA = 5,6-epoxy-(8Z,11Z,14Z)-eicosatrienoyl-CoA + AMP + diphosphate. It catalyses the reaction 14,15-epoxy-(5Z,8Z,11Z)-eicosatrienoate + ATP + CoA = 14,15-epoxy-(5Z,8Z,11Z)-eicosatrienoyl-CoA + AMP + diphosphate. It carries out the reaction 11,12-epoxy-(5Z,8Z,14Z)-eicosatrienoate + ATP + CoA = 11,12-epoxy-(5Z,8Z,14Z)-eicosatrienoyl-CoA + AMP + diphosphate. The catalysed reaction is 8,9-epoxy-(5Z,11Z,14Z)-eicosatrienoate + ATP + CoA = 8,9-epoxy-(5Z,11Z,14Z)-eicosatrienoyl-CoA + AMP + diphosphate. The enzyme catalyses hexadecanoate + ATP + CoA = hexadecanoyl-CoA + AMP + diphosphate. It catalyses the reaction (E)-hexadec-2-enoate + ATP + CoA = (2E)-hexadecenoyl-CoA + AMP + diphosphate. Its activity is regulated as follows. Both triacsin C and rosiglitazone inhibit arachidonoyl-CoA ligase activity. Its function is as follows. Catalyzes the conversion of long-chain fatty acids to their active form acyl-CoA for both synthesis of cellular lipids, and degradation via beta-oxidation. Preferentially activates arachidonate and eicosapentaenoate as substrates. Preferentially activates 8,9-EET &gt; 14,15-EET &gt; 5,6-EET &gt; 11,12-EET. Modulates glucose-stimulated insulin secretion by regulating the levels of unesterified EETs. Modulates prostaglandin E2 secretion. This chain is Long-chain-fatty-acid--CoA ligase 4 (Acsl4), found in Mus musculus (Mouse).